A 139-amino-acid polypeptide reads, in one-letter code: Small ribosomal subunit protein bS16 (139 aa).

Positions 84–139 are disordered; the sequence is KGEPAPAPLLQPAEKAARPSFEAIGGEDEGKGEAITQKKKADKKDEAAAESSASEA.

Belongs to the bacterial ribosomal protein bS16 family.

This Streptomyces coelicolor (strain ATCC BAA-471 / A3(2) / M145) protein is Small ribosomal subunit protein bS16.